Reading from the N-terminus, the 1070-residue chain is DNA-directed RNA polymerase subunit beta (1070 aa).

This sequence belongs to the RNA polymerase beta chain family. As to quaternary structure, in plastids the minimal PEP RNA polymerase catalytic core is composed of four subunits: alpha, beta, beta', and beta''. When a (nuclear-encoded) sigma factor is associated with the core the holoenzyme is formed, which can initiate transcription.

It localises to the plastid. The protein resides in the chloroplast. It catalyses the reaction RNA(n) + a ribonucleoside 5'-triphosphate = RNA(n+1) + diphosphate. In terms of biological role, DNA-dependent RNA polymerase catalyzes the transcription of DNA into RNA using the four ribonucleoside triphosphates as substrates. This is DNA-directed RNA polymerase subunit beta from Solanum tuberosum (Potato).